The chain runs to 229 residues: Large ribosomal subunit protein uL1 (229 aa).

The protein belongs to the universal ribosomal protein uL1 family. Part of the 50S ribosomal subunit.

Its function is as follows. Binds directly to 23S rRNA. The L1 stalk is quite mobile in the ribosome, and is involved in E site tRNA release. Protein L1 is also a translational repressor protein, it controls the translation of the L11 operon by binding to its mRNA. The protein is Large ribosomal subunit protein uL1 of Streptococcus suis (strain 98HAH33).